The following is a 1368-amino-acid chain: DNA-directed RNA polymerase subunit beta (1368 aa).

This sequence belongs to the RNA polymerase beta chain family. In terms of assembly, the RNAP catalytic core consists of 2 alpha, 1 beta, 1 beta' and 1 omega subunit. When a sigma factor is associated with the core the holoenzyme is formed, which can initiate transcription.

The catalysed reaction is RNA(n) + a ribonucleoside 5'-triphosphate = RNA(n+1) + diphosphate. Functionally, DNA-dependent RNA polymerase catalyzes the transcription of DNA into RNA using the four ribonucleoside triphosphates as substrates. In Burkholderia pseudomallei (strain K96243), this protein is DNA-directed RNA polymerase subunit beta.